Here is a 70-residue protein sequence, read N- to C-terminus: Large ribosomal subunit protein bL31 (70 aa).

Zn(2+) is bound by residues cysteine 16, cysteine 18, cysteine 38, and cysteine 41.

It belongs to the bacterial ribosomal protein bL31 family. Type A subfamily. In terms of assembly, part of the 50S ribosomal subunit. It depends on Zn(2+) as a cofactor.

Functionally, binds the 23S rRNA. This Saccharopolyspora erythraea (strain ATCC 11635 / DSM 40517 / JCM 4748 / NBRC 13426 / NCIMB 8594 / NRRL 2338) protein is Large ribosomal subunit protein bL31.